The chain runs to 200 residues: MLSHERRLWADGYERVAGLDEAGRGCLAGPVVAAAVIMPPQVEITAIQDSKALSEGQRLDARATIEDEAVAASIARCSPTEIDDRNILQAALEAMRRAASGCRPPPDFVLVDGNQWDRNLVDAPWPHETVVKGDAKSQSIAAASILAKTERDALMRDLHEAHPEYDWASNVGYPTQQHYDALREHGATPHHRQSFTLFRD.

The 187-residue stretch at 14–200 folds into the RNase H type-2 domain; it reads ERVAGLDEAG…HRQSFTLFRD (187 aa). The a divalent metal cation site is built by aspartate 20, glutamate 21, and aspartate 112.

It belongs to the RNase HII family. The cofactor is Mn(2+). Mg(2+) serves as cofactor.

The protein resides in the cytoplasm. It catalyses the reaction Endonucleolytic cleavage to 5'-phosphomonoester.. Functionally, endonuclease that specifically degrades the RNA of RNA-DNA hybrids. In Salinibacter ruber (strain DSM 13855 / M31), this protein is Ribonuclease HII.